The chain runs to 368 residues: Putative alcohol dehydrogenase D (368 aa).

Zn(2+) contacts are provided by Cys40, His61, Cys91, Cys94, Cys97, Cys105, and Cys167.

This sequence belongs to the zinc-containing alcohol dehydrogenase family. It depends on Zn(2+) as a cofactor.

It carries out the reaction a primary alcohol + NAD(+) = an aldehyde + NADH + H(+). It catalyses the reaction a secondary alcohol + NAD(+) = a ketone + NADH + H(+). Required for maintaining the appropriate mycolic acid composition and permeability of the envelope on its exposure to acidic pH. The chain is Putative alcohol dehydrogenase D (adhD) from Mycobacterium tuberculosis (strain CDC 1551 / Oshkosh).